The following is a 328-amino-acid chain: tRNA uridine(34) hydroxylase (328 aa).

The Rhodanese domain maps to 123–217 (SDPETVLIDT…YLEEVPKEKS (95 aa)). The active-site Cysteine persulfide intermediate is the C177. Residues 304 to 328 (AKKLAQLNKQKKQQAKEAARKKAQQ) form a disordered region. Over residues 317 to 328 (QAKEAARKKAQQ) the composition is skewed to basic and acidic residues.

The protein belongs to the TrhO family.

It carries out the reaction uridine(34) in tRNA + AH2 + O2 = 5-hydroxyuridine(34) in tRNA + A + H2O. Its function is as follows. Catalyzes oxygen-dependent 5-hydroxyuridine (ho5U) modification at position 34 in tRNAs. The sequence is that of tRNA uridine(34) hydroxylase from Francisella tularensis subsp. holarctica (strain LVS).